A 109-amino-acid chain; its full sequence is Ferredoxin (109 aa).

4Fe-4S ferredoxin-type domains are found at residues 2-30 (TYVV…YEGE) and 31-60 (FMLV…PESP). Positions 9 and 17 each coordinate [3Fe-4S] cluster. [4Fe-4S] cluster contacts are provided by C21, C40, C43, and C46. [3Fe-4S] cluster is bound at residue C50.

It depends on [4Fe-4S] cluster as a cofactor. [3Fe-4S] cluster serves as cofactor.

In terms of biological role, ferredoxins are iron-sulfur proteins that transfer electrons in a wide variety of metabolic reactions. In Rickettsia felis (strain ATCC VR-1525 / URRWXCal2) (Rickettsia azadi), this protein is Ferredoxin (fdxA).